The primary structure comprises 197 residues: 7-methyl-GTP pyrophosphatase (197 aa).

Aspartate 74 serves as the catalytic Proton acceptor.

The protein belongs to the Maf family. YceF subfamily. A divalent metal cation serves as cofactor.

It localises to the cytoplasm. The catalysed reaction is N(7)-methyl-GTP + H2O = N(7)-methyl-GMP + diphosphate + H(+). Nucleoside triphosphate pyrophosphatase that hydrolyzes 7-methyl-GTP (m(7)GTP). May have a dual role in cell division arrest and in preventing the incorporation of modified nucleotides into cellular nucleic acids. The sequence is that of 7-methyl-GTP pyrophosphatase from Saccharophagus degradans (strain 2-40 / ATCC 43961 / DSM 17024).